The primary structure comprises 122 residues: Basic phospholipase A2 Ts-G6D49 (122 aa).

7 disulfide bridges follow: Cys-26/Cys-115, Cys-28/Cys-44, Cys-43/Cys-95, Cys-49/Cys-122, Cys-50/Cys-88, Cys-57/Cys-81, and Cys-75/Cys-86. 3 residues coordinate Ca(2+): Tyr-27, Gly-29, and Gly-31. His-47 is an active-site residue. Residue Asp-48 participates in Ca(2+) binding. The active site involves Asp-89.

Ca(2+) is required as a cofactor. Expressed by the venom gland.

It is found in the secreted. It carries out the reaction a 1,2-diacyl-sn-glycero-3-phosphocholine + H2O = a 1-acyl-sn-glycero-3-phosphocholine + a fatty acid + H(+). Snake venom phospholipase A2 that induces fast and sustaining local edema a few hours after injection (5-10 ug) in the hind paw, and prolongs the coagulation time of human plasma. Exhibits moderate hydrolytic activities and prefers the zwitterionic micelles (dPPC with Triton X-100) to the anionic micelles (dPPC with deoxycholate). PLA2 catalyzes the calcium-dependent hydrolysis of the 2-acyl groups in 3-sn-phosphoglycerides. The polypeptide is Basic phospholipase A2 Ts-G6D49 (Trimeresurus stejnegeri (Chinese green tree viper)).